Reading from the N-terminus, the 129-residue chain is C-phycocyanin beta subunit (129 aa).

N62 is subject to N4-methylasparagine. Residue C116 participates in (2R,3E)-phycocyanobilin binding.

Belongs to the phycobiliprotein family. Heterodimer of an alpha and a beta subunit, which further assembles into trimers and the trimers into hexamers. Post-translationally, two isomers exist. Contains two covalently linked bilin chromophores.

The protein localises to the cellular thylakoid membrane. Light-harvesting photosynthetic bile pigment-protein from the phycobiliprotein complex (phycobilisome, PBS). Phycocyanin is the major phycobiliprotein in the PBS rod. This chain is C-phycocyanin beta subunit, found in Aphanizomenon flos-aquae.